Reading from the N-terminus, the 85-residue chain is Beta-toxin BmKAs1 (85 aa).

Positions 1–19 (MKIIIFLIVCSFVLIGVKA) are cleaved as a signal peptide. Residues 20-82 (DNGYLLNKYT…LWAYETNKCN (63 aa)) form the LCN-type CS-alpha/beta domain. 4 disulfides stabilise this stretch: Cys31–Cys81, Cys35–Cys56, Cys42–Cys63, and Cys46–Cys65.

Belongs to the long (4 C-C) scorpion toxin superfamily. Sodium channel inhibitor family. A possible sulfoxide Met-85 on BmP09 could explain the difference of function between BmK AS-1 and BmP09. Expressed by the venom gland.

The protein localises to the secreted. Its function is as follows. Beta toxins bind voltage-independently at site-4 of sodium channels (Nav) and shift the voltage of activation toward more negative potentials thereby affecting sodium channel activation and promoting spontaneous and repetitive firing. BmKAs1 also significantly stimulates the binding of [3H]-ryanodine to ryanodine receptors on the sarcoplasmic reticulum of the skeletal muscle. It also displays antinociceptive effect in rat models. In terms of biological role, toxin BmP09 (which may be post-translationally modified) specifically and reversibly blocks large conductance calcium-dependent and voltage-dependent potassium channels (BK) but has no effect on sodium channels. This is Beta-toxin BmKAs1 from Olivierus martensii (Manchurian scorpion).